The sequence spans 616 residues: Ectonucleoside triphosphate diphosphohydrolase 4 (616 aa).

Residues 1-33 (MGRIGISCLFPASWHFSISPVGCPRILNTNLRQ) are Cytoplasmic-facing. The helical transmembrane segment at 34–54 (IMVISVLAAAVSLLYFSVVII) threads the bilayer. Residues 55 to 559 (RNKYGRLTRD…ASHTHWRGVS (505 aa)) lie on the Lumenal side of the membrane. Catalysis depends on Glu-222, which acts as the Proton acceptor. Cys-368 and Cys-395 are joined by a disulfide. N-linked (GlcNAc...) asparagine glycans are attached at residues Asn-404 and Asn-407. Cys-461 and Cys-490 form a disulfide bridge. The helical transmembrane segment at 560–580 (FVYNHYLFSGCFLVVLLAILL) threads the bilayer. Residues 581–616 (YLLRLRRIHRRTPRSSSAAALWMEEGLPAQNAPGTL) are Cytoplasmic-facing.

The protein belongs to the GDA1/CD39 NTPase family. Ca(2+) serves as cofactor. Requires Mg(2+) as cofactor. As to expression, ubiquitous. Highest expression in testis and lowest in bladder.

It localises to the cytoplasmic vesicle. It is found in the autophagosome membrane. Its subcellular location is the lysosome membrane. The protein resides in the golgi apparatus membrane. It catalyses the reaction a ribonucleoside 5'-diphosphate + H2O = a ribonucleoside 5'-phosphate + phosphate + H(+). The enzyme catalyses a ribonucleoside 5'-triphosphate + H2O = a ribonucleoside 5'-diphosphate + phosphate + H(+). It carries out the reaction UDP + H2O = UMP + phosphate + H(+). The catalysed reaction is UTP + H2O = UDP + phosphate + H(+). It catalyses the reaction CTP + H2O = CDP + phosphate + H(+). The enzyme catalyses GDP + H2O = GMP + phosphate + H(+). It carries out the reaction GTP + H2O = GDP + phosphate + H(+). The catalysed reaction is 5-methyl-UTP + H2O = 5-methyl-UDP + phosphate + H(+). Its function is as follows. Catalyzes the hydrolysis of nucleoside triphosphates and diphosphates in a calcium- or magnesium-dependent manner, with a preference for pyrimidines. Preferentially hydrolyzes UTP and TTP. AMP, ADP, ATP and UMP are not substrates. Preferentially activated by Ca(2+) over Mg(2+). Functionally, has a broad substrate specificity with the ability of cleaving all nucleotide di- and triphosphates with the exception of adenosine di- and triphosphate (ADP and ATP). Preferentially hydrolyzes CTP, UDP, CDP, GTP and GDP. Can use either Ca(2+) or Mg(2+) equally. This is Ectonucleoside triphosphate diphosphohydrolase 4 from Homo sapiens (Human).